Here is a 322-residue protein sequence, read N- to C-terminus: Mitochondrial thiamine pyrophosphate carrier 1 (322 aa).

Solcar repeat units lie at residues 12 to 111, 122 to 208, and 215 to 310; these read GSKT…VTLA, PAAA…LRVP, and PFGS…VLRL. 6 helical membrane-spanning segments follow: residues 18–38, 92–108, 128–148, 180–200, 221–241, and 285–302; these read MIAG…LDVV, LMYV…YRSV, FIAG…LDLL, FFQG…IFFA, ATAG…FDLI, and GLTV…VTMW.

It belongs to the mitochondrial carrier (TC 2.A.29) family.

Its subcellular location is the mitochondrion inner membrane. Functionally, mitochondrial transporter that mediates uptake of thiamine pyrophosphate (ThPP) into mitochondria. The chain is Mitochondrial thiamine pyrophosphate carrier 1 (tpc1) from Sclerotinia sclerotiorum (strain ATCC 18683 / 1980 / Ss-1) (White mold).